The primary structure comprises 87 residues: DNA-directed RNA polymerase subunit omega (87 aa).

Belongs to the RNA polymerase subunit omega family. The RNAP catalytic core consists of 2 alpha, 1 beta, 1 beta' and 1 omega subunit. When a sigma factor is associated with the core the holoenzyme is formed, which can initiate transcription.

The catalysed reaction is RNA(n) + a ribonucleoside 5'-triphosphate = RNA(n+1) + diphosphate. In terms of biological role, promotes RNA polymerase assembly. Latches the N- and C-terminal regions of the beta' subunit thereby facilitating its interaction with the beta and alpha subunits. In Alcanivorax borkumensis (strain ATCC 700651 / DSM 11573 / NCIMB 13689 / SK2), this protein is DNA-directed RNA polymerase subunit omega.